Consider the following 1712-residue polypeptide: U3 small nucleolar RNA-associated protein 10 (1712 aa).

HEAT repeat units follow at residues 164-202 (EELV…GRGE), 490-528 (TCDF…ASGS), 564-605 (TLLS…PKHG), 987-1025 (TQTI…AFEH), 1236-1275 (VISL…RFGK), 1605-1646 (EEVT…DSAA), and 1667-1705 (LGLL…VLGE).

It belongs to the HEATR1/UTP10 family. Component of the ribosomal small subunit (SSU) processome.

The protein resides in the nucleus. It localises to the nucleolus. In terms of biological role, involved in nucleolar processing of pre-18S ribosomal RNA. Involved in ribosome biosynthesis. In Phaeosphaeria nodorum (strain SN15 / ATCC MYA-4574 / FGSC 10173) (Glume blotch fungus), this protein is U3 small nucleolar RNA-associated protein 10.